Reading from the N-terminus, the 589-residue chain is Proline--tRNA ligase (589 aa).

Belongs to the class-II aminoacyl-tRNA synthetase family. ProS type 1 subfamily. As to quaternary structure, homodimer.

The protein localises to the cytoplasm. It catalyses the reaction tRNA(Pro) + L-proline + ATP = L-prolyl-tRNA(Pro) + AMP + diphosphate. In terms of biological role, catalyzes the attachment of proline to tRNA(Pro) in a two-step reaction: proline is first activated by ATP to form Pro-AMP and then transferred to the acceptor end of tRNA(Pro). As ProRS can inadvertently accommodate and process non-cognate amino acids such as alanine and cysteine, to avoid such errors it has two additional distinct editing activities against alanine. One activity is designated as 'pretransfer' editing and involves the tRNA(Pro)-independent hydrolysis of activated Ala-AMP. The other activity is designated 'posttransfer' editing and involves deacylation of mischarged Ala-tRNA(Pro). The misacylated Cys-tRNA(Pro) is not edited by ProRS. In Gloeobacter violaceus (strain ATCC 29082 / PCC 7421), this protein is Proline--tRNA ligase.